The chain runs to 36 residues: Peruvianin-1 (36 aa).

The protein belongs to the germin family. Homohexamer, possibly consisting of a trimer of dimers. In terms of processing, glycosylated.

With respect to regulation, inhibited by iodoacetamide and trans-epoxysuccinyl-L-leucylamido(4-guanidino)butane (E-64) but not by phenylmethylsulfonyl fluoride (PMSF), pepstatin-A, ethylenediamine tetra acetic acid (EDTA) or ethylene glycol tetraacetic acid (EGTA). Its function is as follows. Cysteine protease able to degrade azocasein and benzoyl-arginine-beta-naphtylamide (BANA) in vitro. The chain is Peruvianin-1 from Thevetia peruviana (Yellow oleander).